The following is a 396-amino-acid chain: KiSS-1 receptor (396 aa).

The Extracellular portion of the chain corresponds to 1-46 (MAAEATLGPNVSWWAPSNASGCPGCGVNASDGPGSAPRPLDAWLVP). N10, N18, and N28 each carry an N-linked (GlcNAc...) asparagine glycan. The helical transmembrane segment at 47-67 (LFFAALMLLGLVGNSLVIFVI) threads the bilayer. Over 68 to 90 (CRHKHMQTVTNFYIANLAATDVT) the chain is Cytoplasmic. The helical transmembrane segment at 91–111 (FLLCCVPFTALLYPLPTWVLG) threads the bilayer. Over 112-120 (DFMCKFVNY) the chain is Extracellular. An intrachain disulfide couples C115 to C191. The chain crosses the membrane as a helical span at residues 121 to 138 (IQQVSVQATCATLTAMSV). The Cytoplasmic portion of the chain corresponds to 139–159 (DRWYVTVFPLRALHRRTPRLA). Residues 160 to 180 (LTVSLSIWVGSAAVSAPVLAL) traverse the membrane as a helical segment. At 181–202 (HRLSPGPHTYCSEAFPSRALER) the chain is on the extracellular side. Residues 203–223 (AFALYNLLALYLLPLLATCAC) form a helical membrane-spanning segment. Residues 224–264 (YGAMLRHLGRAAVRPAPTDGALQGQLLAQRAGAVRTKVSRL) lie on the Cytoplasmic side of the membrane. A helical membrane pass occupies residues 265–285 (VAAVVLLFAACWGPIQLFLVL). Residues 286–305 (QALGPSGAWHPRSYAAYALK) lie on the Extracellular side of the membrane. A helical membrane pass occupies residues 306–326 (IWAHCMSYSNSALNPLLYAFL). Topologically, residues 327–396 (GSHFRQAFCR…SVQDEHTAPL (70 aa)) are cytoplasmic. Residues 346–396 (RRPHASAHSDRAAPHSVPHSRAAHPVRVRTPEPGNPVRRSPSVQDEHTAPL) form a disordered region.

The protein belongs to the G-protein coupled receptor 1 family. As to expression, highest expression levels in the cerebrum and cecum. Moderate expression in the ovary, colon and placenta. Low levels in the uterus, small intestine, and thymus. Expressed only moderately in the placenta. No expression in kidney tissues. Has a complex and abundant central nervous system expression pattern. Expressed in brain regions such as pons, midbrain, thalamus, hypothalamus, hippocampus, amygdala, cortex, frontal cortex, and striatum. No expression in the cerebellum. Persistent expression is detected in hypothalamus throughout postnatal development, with maximum expression levels at puberty in both male and female. Hypothalamic expression changed throughout the estrus cycle and is significantly increased after gonadectomy, a rise that is prevented by sex steroid replacement both in males and females.

Its subcellular location is the cell membrane. Functionally, receptor for metastin, a C-terminally amidated peptide of KiSS1. KiSS1 is a metastasis suppressor protein. Activation of the receptor inhibits cell proliferation and cell migration, key characteristics of tumor metastasis. The receptor is essential for normal gonadotropin-released hormone physiology and for puberty. The hypothalamic KiSS1/KISS1R system is a pivotal factor in central regulation of the gonadotropic axis at puberty and in adulthood. Analysis of the transduction pathways activated by the receptor identifies coupling to phospholipase C and intracellular calcium release through pertussis toxin-insensitive G(q) proteins. This Rattus norvegicus (Rat) protein is KiSS-1 receptor (Kiss1r).